Here is a 165-residue protein sequence, read N- to C-terminus: Peptidyl-prolyl cis-trans isomerase-like 1 (165 aa).

Residues 3–157 enclose the PPIase cyclophilin-type domain; sequence EREEVILDTS…IVQKILYALN (155 aa).

The protein belongs to the cyclophilin-type PPIase family. PPIL1 subfamily.

The catalysed reaction is [protein]-peptidylproline (omega=180) = [protein]-peptidylproline (omega=0). Functionally, PPIases accelerate the folding of proteins. It catalyzes the cis-trans isomerization of proline imidic peptide bonds in oligopeptides. In Rhizopus delemar (strain RA 99-880 / ATCC MYA-4621 / FGSC 9543 / NRRL 43880) (Mucormycosis agent), this protein is Peptidyl-prolyl cis-trans isomerase-like 1 (cyp3).